A 363-amino-acid polypeptide reads, in one-letter code: S-adenosylmethionine decarboxylase proenzyme (363 aa).

Active-site residues include Glu-9 and Glu-12. Catalysis depends on Ser-69, which acts as the Schiff-base intermediate with substrate; via pyruvic acid. A Pyruvic acid (Ser); by autocatalysis modification is found at Ser-69. Cys-83 (proton donor; for catalytic activity) is an active-site residue. Catalysis depends on proton acceptor; for processing activity residues Ser-232 and His-245.

The protein belongs to the eukaryotic AdoMetDC family. Pyruvate is required as a cofactor. In terms of processing, is synthesized initially as an inactive proenzyme. Formation of the active enzyme involves a self-maturation process in which the active site pyruvoyl group is generated from an internal serine residue via an autocatalytic post-translational modification. Two non-identical subunits are generated from the proenzyme in this reaction, and the pyruvate is formed at the N-terminus of the alpha chain, which is derived from the carboxyl end of the proenzyme. The post-translation cleavage follows an unusual pathway, termed non-hydrolytic serinolysis, in which the side chain hydroxyl group of the serine supplies its oxygen atom to form the C-terminus of the beta chain, while the remainder of the serine residue undergoes an oxidative deamination to produce ammonia and the pyruvoyl group blocking the N-terminus of the alpha chain.

The catalysed reaction is S-adenosyl-L-methionine + H(+) = S-adenosyl 3-(methylsulfanyl)propylamine + CO2. Its pathway is amine and polyamine biosynthesis; S-adenosylmethioninamine biosynthesis; S-adenosylmethioninamine from S-adenosyl-L-methionine: step 1/1. In Spinacia oleracea (Spinach), this protein is S-adenosylmethionine decarboxylase proenzyme (SAMDC).